The sequence spans 309 residues: D-galacturonate reductase (309 aa).

The Proton donor role is filled by Y50. Residue H109 participates in substrate binding. Position 210–264 (210–264 (SPLGSTGSPLMSADPVVKIAEKKGISPTTVLLSYHVNRGSTVLAKSVTPARIKAN)) interacts with NADP(+).

This sequence belongs to the aldo/keto reductase family.

It catalyses the reaction L-galactonate + NADP(+) = aldehydo-D-galacturonate + NADPH + H(+). The protein operates within carbohydrate acid metabolism. Its function is as follows. Mediates the reduction of D-galacturonate to L-galactonate, the first step in D-galacturonate catabolic process. Also has activity with D-glucuronate and DL-glyceraldehyde. No activity is observed with D-glucose, D-fructose, D-xylose, D-galactose, L-arabinose or D-mannose. Activity is seen only with NADPH and not with NADH. The polypeptide is D-galacturonate reductase (gar1) (Hypocrea jecorina (Trichoderma reesei)).